The following is a 74-amino-acid chain: Conotoxin ArMKLT2-041 (74 aa).

Residues 1–22 form the signal peptide; the sequence is MKLTCVLIVAVLFLTACQLIAA. Residues 23 to 46 constitute a propeptide that is removed on maturation; sequence DDSRDLQKFPRRKMRDGMLNTKNT. Q49 carries the pyrrolidone carboxylic acid modification. 3 cysteine pairs are disulfide-bonded: C50/C65, C57/C68, and C64/C73.

Belongs to the conotoxin O1 superfamily. In terms of tissue distribution, expressed by the venom duct.

Its subcellular location is the secreted. The polypeptide is Conotoxin ArMKLT2-041 (Conus arenatus (Sand-dusted cone)).